A 424-amino-acid polypeptide reads, in one-letter code: Histidine--tRNA ligase (424 aa).

This sequence belongs to the class-II aminoacyl-tRNA synthetase family. In terms of assembly, homodimer.

Its subcellular location is the cytoplasm. It catalyses the reaction tRNA(His) + L-histidine + ATP = L-histidyl-tRNA(His) + AMP + diphosphate + H(+). The chain is Histidine--tRNA ligase from Shigella sonnei (strain Ss046).